Consider the following 451-residue polypeptide: UDP-N-acetylmuramoylalanine--D-glutamate ligase (451 aa).

118-124 is an ATP binding site; that stretch reads GSNGKTT.

This sequence belongs to the MurCDEF family.

The protein resides in the cytoplasm. It catalyses the reaction UDP-N-acetyl-alpha-D-muramoyl-L-alanine + D-glutamate + ATP = UDP-N-acetyl-alpha-D-muramoyl-L-alanyl-D-glutamate + ADP + phosphate + H(+). It participates in cell wall biogenesis; peptidoglycan biosynthesis. Functionally, cell wall formation. Catalyzes the addition of glutamate to the nucleotide precursor UDP-N-acetylmuramoyl-L-alanine (UMA). This Shouchella clausii (strain KSM-K16) (Alkalihalobacillus clausii) protein is UDP-N-acetylmuramoylalanine--D-glutamate ligase.